Reading from the N-terminus, the 154-residue chain is MFTQANLFLILLLAIALIAKNQSLLFAVSVLLIIKIVGLDQKLFPTIQSKGINWGVTIITIAVLVPIATGEIGFKQLGEAMRSSYAWIALGAGIAVALIAKNGLTLLENDPHITTALVIGTILAVALFGGVAVGPLIGAGIAYLAMQIVKLFTS.

Helical transmembrane passes span 8–28, 54–74, 87–107, and 117–137; these read FLIL…LFAV, WGVT…EIGF, WIAL…LTLL, and LVIG…GPLI.

It belongs to the UPF0756 family.

It is found in the cell membrane. The protein is UPF0756 membrane protein YtwI (ytwI) of Bacillus subtilis (strain 168).